We begin with the raw amino-acid sequence, 451 residues long: MLVRTLYISSSVGSSNMLCNHGLKVIGKYSAIHEATRKIIVRSYSKETIKKHNKQAILNTAPIEFIANNSPLVGISDVNTIKEAAKRTLRCTDDVTDDQTDEIHPHLPFNVKPVDGKARAALKKEKNSMSLDIKKTMEAYVQLTKPRLTILVMLSAICSYALSPYPATVTELLCLTVGTTMCSGAANAINMGREPDYDRQMIRTQARPVVRGAVTPKQAFSFAFGMGTLGTSILYLGVNPTVAALGLSNIALYSWIYTSLKRKHIINTWVGALVGAIPPLMGWAAASPLTHPGSWCLAGLLYAWQFPHFNTLSHNIRNEYKNAGYVMTAWKNPLLNARVALRYSLLMFPLCFGLSYFNITDWYYQIDSGLVNAWLCLWSFKFYMQQRLNYSSKIKNDRVKFNEGLATANVYARKAFFASVLHLPAVLILAILHKKNRWDWLFEDSENPKLK.

6 helical membrane-spanning segments follow: residues 149 to 169, 240 to 260, 265 to 285, 289 to 309, 339 to 359, and 414 to 434; these read TILV…PATV, PTVA…YTSL, IINT…GWAA, LTHP…FPHF, VALR…YFNI, and KAFF…ILHK.

The protein belongs to the UbiA prenyltransferase family.

Its subcellular location is the mitochondrion membrane. Converts protoheme IX and farnesyl diphosphate to heme O. This chain is Protoheme IX farnesyltransferase, mitochondrial (COX10), found in Candida glabrata (strain ATCC 2001 / BCRC 20586 / JCM 3761 / NBRC 0622 / NRRL Y-65 / CBS 138) (Yeast).